A 405-amino-acid polypeptide reads, in one-letter code: L-carnitine CoA-transferase (405 aa).

Residues Lys-97 and Arg-104 each contribute to the CoA site. Residue Asp-169 is the Nucleophile of the active site.

Belongs to the CoA-transferase III family. CaiB subfamily. As to quaternary structure, homodimer.

The protein resides in the cytoplasm. It catalyses the reaction crotonobetainyl-CoA + (R)-carnitine = crotonobetaine + (R)-carnitinyl-CoA. The catalysed reaction is 4-(trimethylamino)butanoyl-CoA + (R)-carnitine = (R)-carnitinyl-CoA + 4-(trimethylamino)butanoate. Its pathway is amine and polyamine metabolism; carnitine metabolism. Its function is as follows. Catalyzes the reversible transfer of the CoA moiety from gamma-butyrobetainyl-CoA to L-carnitine to generate L-carnitinyl-CoA and gamma-butyrobetaine. Is also able to catalyze the reversible transfer of the CoA moiety from gamma-butyrobetainyl-CoA or L-carnitinyl-CoA to crotonobetaine to generate crotonobetainyl-CoA. The protein is L-carnitine CoA-transferase of Shigella flexneri serotype 5b (strain 8401).